The chain runs to 540 residues: Medium/long-chain-fatty-acid--[acyl-carrier-protein] ligase FadD10 (540 aa).

T177 serves as a coordination point for Mg(2+). ATP-binding residues include I226, V316, and S320. E321 lines the Mg(2+) pocket. D408 is an ATP binding site.

Belongs to the ATP-dependent AMP-binding enzyme family. As to quaternary structure, homodimer. Mg(2+) is required as a cofactor.

The protein resides in the cytoplasm. It carries out the reaction a medium-chain fatty acid + holo-[ACP] + ATP = a medium-chain fatty acyl-[ACP] + AMP + diphosphate. It catalyses the reaction a medium-chain fatty acid + ATP + H(+) = a medium-chain fatty acyl-AMP + diphosphate. The catalysed reaction is a medium-chain fatty acyl-AMP + holo-[ACP] = a medium-chain fatty acyl-[ACP] + AMP + H(+). The enzyme catalyses a long-chain fatty acid + holo-[ACP] + ATP = a long-chain fatty acyl-[ACP] + AMP + diphosphate. It carries out the reaction a long-chain fatty acid + ATP + H(+) = a long-chain fatty acyl-AMP + diphosphate. It catalyses the reaction a long-chain fatty acyl-AMP + holo-[ACP] = a long-chain fatty acyl-[ACP] + AMP + H(+). The catalysed reaction is a (2E)-enoyl fatty acid + holo-[ACP] + ATP = a (2E)-enoyl-[ACP] + AMP + diphosphate. The enzyme catalyses a (2E)-enoyl fatty acid + ATP + H(+) = a (2E)-2-fatty-enoyl-AMP + diphosphate. It carries out the reaction a (2E)-2-fatty-enoyl-AMP + holo-[ACP] = a (2E)-enoyl-[ACP] + AMP + H(+). It catalyses the reaction a (3R)-3-isocyanyl-fatty acid + holo-[ACP] + ATP = a (3R)-3-isocyanyl-fatty acyl-[ACP] + AMP + diphosphate. The catalysed reaction is a (3R)-3-isocyanyl-fatty acid + ATP + H(+) = a (3R)-3-isocyanyl-fatty acyl-AMP + diphosphate. The enzyme catalyses a (3R)-3-isocyanyl-fatty acyl-AMP + holo-[ACP] = a (3R)-3-isocyanyl-fatty acyl-[ACP] + AMP + H(+). It participates in lipid metabolism; fatty acid metabolism. Its function is as follows. Acyl:acyl-carrier protein ligase involved in the biosynthesis of a unique class of isonitrile lipopeptides (INLPs) that seem to function as virulence factors in M.tuberculosis and to play a role in metal acquisition. Catalyzes the activation of medium/long-chain fatty acids as acyl-adenylates (acyl-AMP), which are then transferred to the phosphopantetheine arm of the acyl-carrier protein (ACP) MT0109. Acts twice during the INLP pathway, catalyzing the activation of a (2E)-enoyl fatty acid as well as the corresponding (3R)-3-isocyanyl-fatty acid as acyl-adenylates (acyl-AMP), and then the acyl transfer to the dedicated acyl-carrier protein MT0109. This chain is Medium/long-chain-fatty-acid--[acyl-carrier-protein] ligase FadD10 (fadD10), found in Mycobacterium tuberculosis (strain CDC 1551 / Oshkosh).